The chain runs to 898 residues: Translation initiation factor IF-2 (898 aa).

A disordered region spans residues 51–302 (KEHGDATGSE…RKGRINKPMS (252 aa)). Basic and acidic residues-rich tracts occupy residues 100-164 (SSVE…KRET) and 171-230 (RSDE…KETV). Residues 234 to 245 (QENTDYHVTTSR) are compositionally biased toward polar residues. Residues 263–273 (RRSTKANKRKM) show a composition bias toward basic residues. A compositionally biased stretch (basic and acidic residues) spans 274–286 (SSRDDNQERDSRP). Positions 287 to 297 (RGGKAGRKGRI) are enriched in basic residues. One can recognise a tr-type G domain in the interval 397–566 (SRAPVVTIMG…LLQAEVLELK (170 aa)). The segment at 406 to 413 (GHVDHGKT) is G1. Position 406-413 (406-413 (GHVDHGKT)) interacts with GTP. The interval 431-435 (GITQH) is G2. The G3 stretch occupies residues 452–455 (DTPG). Residues 452–456 (DTPGH) and 506–509 (NKID) contribute to the GTP site. Positions 506-509 (NKID) are G4. The interval 542–544 (SAK) is G5.

The protein belongs to the TRAFAC class translation factor GTPase superfamily. Classic translation factor GTPase family. IF-2 subfamily.

Its subcellular location is the cytoplasm. Functionally, one of the essential components for the initiation of protein synthesis. Protects formylmethionyl-tRNA from spontaneous hydrolysis and promotes its binding to the 30S ribosomal subunits. Also involved in the hydrolysis of GTP during the formation of the 70S ribosomal complex. The polypeptide is Translation initiation factor IF-2 (Vibrio cholerae serotype O1 (strain ATCC 39541 / Classical Ogawa 395 / O395)).